The primary structure comprises 1052 residues: Carboxylic acid reductase (1052 aa).

An adenylation (A) domain region spans residues 21–344; the sequence is RALNEPNREW…ATEFTPFPFY (324 aa). Residues 334–335, Thr-339, and 419–422 contribute to the AMP site; these read SA and YQGR. The region spanning 560-643 is the Carrier domain; the sequence is SSSDALIVSI…RLADYLLSIV (84 aa). At Ser-595 the chain carries O-(pantetheine 4'-phosphoryl)serine. The tract at residues 684 to 979 is carboxylic acid reductase (R) domain; that stretch reads GQVVVITGTT…QKIVPLDEWL (296 aa). NADP(+) contacts are provided by residues 693 to 696, Arg-718, 774 to 776, Ser-814, Tyr-844, and Lys-848; these read TGGI and NQW.

This sequence belongs to the adenylate-forming reductase family. Mg(2+) serves as cofactor.

The catalysed reaction is an aromatic aldehyde + AMP + diphosphate + NADP(+) = an aromatic carboxylate + ATP + NADPH + H(+). The enzyme catalyses a carboxylate + ATP + NADPH + H(+) = an aldehyde + AMP + diphosphate + NADP(+). It carries out the reaction benzoate + ATP + NADPH + H(+) = benzaldehyde + AMP + diphosphate + NADP(+). It catalyses the reaction (E)-cinnamate + ATP + NADPH + H(+) = (E)-cinnamaldehyde + AMP + diphosphate + NADP(+). The catalysed reaction is piperonylate + ATP + NADPH + H(+) = piperonal + AMP + diphosphate + NADP(+). The enzyme catalyses salicylate + ATP + NADPH + H(+) = salicylaldehyde + AMP + diphosphate + NADP(+). It carries out the reaction 3-hydroxybenzoate + ATP + NADPH + H(+) = 3-hydroxybenzaldehyde + AMP + diphosphate + NADP(+). It catalyses the reaction 2-methoxybenzoate + ATP + NADPH + H(+) = 2-methoxybenzaldehyde + AMP + diphosphate + NADP(+). The catalysed reaction is 3-methoxybenzoate + ATP + NADPH + H(+) = 3-methoxybenzaldehyde + AMP + diphosphate + NADP(+). The enzyme catalyses 4-hydroxybenzoate + ATP + NADPH + H(+) = 4-hydroxybenzaldehyde + AMP + diphosphate + NADP(+). It carries out the reaction 4-methoxybenzoate + ATP + NADPH + H(+) = 4-methoxybenzaldehyde + AMP + diphosphate + NADP(+). It catalyses the reaction 3-phenylpropanoate + ATP + NADPH + H(+) = 3-phenylpropanal + AMP + diphosphate + NADP(+). The catalysed reaction is picolinate + ATP + NADPH + H(+) = picolinal + AMP + diphosphate + NADP(+). The enzyme catalyses propanoate + ATP + NADPH + H(+) = propanal + AMP + diphosphate + NADP(+). It carries out the reaction butanoate + ATP + NADPH + H(+) = butanal + AMP + diphosphate + NADP(+). It catalyses the reaction pentanoate + ATP + NADPH + H(+) = pentanal + AMP + diphosphate + NADP(+). The catalysed reaction is hexanoate + ATP + NADPH + H(+) = hexanal + AMP + diphosphate + NADP(+). The enzyme catalyses heptanoate + ATP + NADPH + H(+) = heptanal + AMP + diphosphate + NADP(+). It carries out the reaction octanoate + ATP + NADPH + H(+) = octanal + AMP + diphosphate + NADP(+). It catalyses the reaction nonanoate + ATP + NADPH + H(+) = nonanal + AMP + diphosphate + NADP(+). Its function is as follows. Carboxylic acid reductase that shows a broad range of substrate specificity towards aromatic acids, especially to phenyl carboxylic and phenyl acrylic acids, to convert them into their respective aldehydes. Also able to use aliphatic acids as substrates. The polypeptide is Carboxylic acid reductase (Neurospora crassa (strain ATCC 24698 / 74-OR23-1A / CBS 708.71 / DSM 1257 / FGSC 987)).